The primary structure comprises 273 residues: Ribosomal RNA small subunit methyltransferase I (273 aa).

It belongs to the methyltransferase superfamily. RsmI family.

The protein localises to the cytoplasm. The catalysed reaction is cytidine(1402) in 16S rRNA + S-adenosyl-L-methionine = 2'-O-methylcytidine(1402) in 16S rRNA + S-adenosyl-L-homocysteine + H(+). Its function is as follows. Catalyzes the 2'-O-methylation of the ribose of cytidine 1402 (C1402) in 16S rRNA. This is Ribosomal RNA small subunit methyltransferase I from Xylella fastidiosa (strain 9a5c).